A 249-amino-acid polypeptide reads, in one-letter code: Cell division protein FtsQ (249 aa).

The Cytoplasmic portion of the chain corresponds to 1-6 (MKFILF). Residues 7–23 (ALLVSAGSWYGWKQLHS) form a helical membrane-spanning segment. Over 24–249 (QDAVSKPIRY…YKNVMKERRI (226 aa)) the chain is Periplasmic. The POTRA domain maps to 29 to 98 (KPIRYVKIEG…DAVHIKITEQ (70 aa)).

It belongs to the FtsQ/DivIB family. FtsQ subfamily. In terms of assembly, part of a complex composed of FtsB, FtsL and FtsQ.

The protein localises to the cell inner membrane. Essential cell division protein. May link together the upstream cell division proteins, which are predominantly cytoplasmic, with the downstream cell division proteins, which are predominantly periplasmic. May control correct divisome assembly. The polypeptide is Cell division protein FtsQ (Methylomonas methanica (strain DSM 25384 / MC09)).